A 119-amino-acid chain; its full sequence is Ribosome-binding factor A (119 aa).

The protein belongs to the RbfA family. As to quaternary structure, monomer. Binds 30S ribosomal subunits, but not 50S ribosomal subunits or 70S ribosomes.

Its subcellular location is the cytoplasm. Functionally, one of several proteins that assist in the late maturation steps of the functional core of the 30S ribosomal subunit. Associates with free 30S ribosomal subunits (but not with 30S subunits that are part of 70S ribosomes or polysomes). Required for efficient processing of 16S rRNA. May interact with the 5'-terminal helix region of 16S rRNA. This chain is Ribosome-binding factor A, found in Buchnera aphidicola subsp. Acyrthosiphon pisum (strain Tuc7).